Here is a 1069-residue protein sequence, read N- to C-terminus: Rab GTPase-activating protein 1 (1069 aa).

Positions 1 to 79 are disordered; sequence MDDKASVGKI…DPPMDDQPGE (79 aa). Residues 7 to 22 show a composition bias toward low complexity; that stretch reads VGKISVSSDSVSTLNS. Ser-42 carries the post-translational modification Phosphoserine. The PID domain occupies 142–298; that stretch reads EDSVVFSKLT…IFTFSVSLEI (157 aa). Ser-360 carries the post-translational modification Phosphoserine. The tract at residues 482 to 527 is disordered; sequence ERERRKTTASPSVRLPQSGSQSSVIPSPPEDDEEEDNDEPLLSGSG. Residues 489-506 are compositionally biased toward polar residues; that stretch reads TASPSVRLPQSGSQSSVI. A compositionally biased stretch (acidic residues) spans 510-520; it reads PEDDEEEDNDE. One can recognise a Rab-GAP TBC domain in the interval 566–752; sequence GVPEALRGEV…HIIDLLLCEG (187 aa). The stretch at 798–1047 forms a coiled coil; sequence KKLMELACNM…ALNEVQAAKK (250 aa). Thr-996 bears the Phosphothreonine mark.

In terms of assembly, interacts with RAB6A and tubulin gamma.

It is found in the cytoplasm. It localises to the cytosol. Its subcellular location is the cytoskeleton. The protein localises to the microtubule organizing center. The protein resides in the centrosome. Its function is as follows. May act as a GTPase-activating protein of RAB6A. May play a role in microtubule nucleation by centrosome. May participate in a RAB6A-mediated pathway involved in the metaphase-anaphase transition. This chain is Rab GTPase-activating protein 1 (RABGAP1), found in Homo sapiens (Human).